The following is a 601-amino-acid chain: 3-hydroxy-3-methylglutaryl-coenzyme A reductase (601 aa).

Residues 1–34 (MDSRRRSPTVTAKAAAGELPLAPHEGQNQQPSIP) are disordered. Transmembrane regions (helical) follow at residues 36–58 (SSDVLPLPLYLANGVFFTLFFSV) and 86–106 (ALASLIASVIYLVSFFGLDFV). The tract at residues 107 to 179 (QSLIYKPNNE…PLITPQNSEE (73 aa)) is linker. The catalytic stretch occupies residues 180 to 601 (DEDIIKAVVA…IASSQLESDS (422 aa)). Catalysis depends on E273, which acts as the Charge relay system. Residue N337 is glycosylated (N-linked (GlcNAc...) asparagine). Catalysis depends on charge relay system residues K405 and D481. The active-site Proton donor is H579. N-linked (GlcNAc...) asparagine glycosylation occurs at N583.

It belongs to the HMG-CoA reductase family.

Its subcellular location is the endoplasmic reticulum membrane. The catalysed reaction is (R)-mevalonate + 2 NADP(+) + CoA = (3S)-3-hydroxy-3-methylglutaryl-CoA + 2 NADPH + 2 H(+). The protein operates within metabolic intermediate biosynthesis; (R)-mevalonate biosynthesis; (R)-mevalonate from acetyl-CoA: step 3/3. In terms of biological role, catalyzes the synthesis of mevalonate. The specific precursor of all isoprenoid compounds present in plants. The chain is 3-hydroxy-3-methylglutaryl-coenzyme A reductase (HMGR) from Catharanthus roseus (Madagascar periwinkle).